Here is a 344-residue protein sequence, read N- to C-terminus: Type VI secretion system component TssA1 (344 aa).

As to quaternary structure, homododecamer. Interacts with TssB1 and TssC1. Interacts with TssK1 and TssF1.

Its function is as follows. Core component of the H1 type VI (H1-T6SS) secretion system that plays a role in the release of toxins targeting both eukaryotic and prokaryotic species. Forms a dodecameric ring-shaped structure located at one end of the T6SS sheath. May properly attach the pre-assembled sheath onto the baseplate and/or stabilize the sheaths tubular structure. This is Type VI secretion system component TssA1 from Pseudomonas aeruginosa (strain ATCC 15692 / DSM 22644 / CIP 104116 / JCM 14847 / LMG 12228 / 1C / PRS 101 / PAO1).